The chain runs to 288 residues: Short chain aldehyde dehydrogenase 1 (288 aa).

NAD(+) contacts are provided by residues 26 to 28 (SGI), Asp-47, 72 to 73 (DV), and 99 to 101 (NAG). The active-site Proton donor is Ser-153. Residues Ser-153 and Tyr-166 each coordinate substrate. NAD(+)-binding residues include Tyr-166, Lys-170, and Thr-201. Tyr-166 (proton acceptor) is an active-site residue. Lys-170 (proton donor/acceptor) is an active-site residue.

This sequence belongs to the short-chain dehydrogenases/reductases (SDR) family. Homodimer. In terms of tissue distribution, expressed in mature seeds.

It carries out the reaction 4,5,8-trihydroxycasbene + 2 NAD(+) = jolkinol C + 2 NADH + 2 H(+). The catalysed reaction is a secondary alcohol + NAD(+) = a ketone + NADH + H(+). The enzyme catalyses a primary alcohol + NAD(+) = an aldehyde + NADH + H(+). The protein operates within secondary metabolite biosynthesis; terpenoid biosynthesis. In terms of biological role, involved in the biosynthesis of macrocyclic lathyrane type diterpenoids (also called Euphorbia factors) natural products, including the cyclization route from casbene to jolkinol C, a precursor for ingenol mebutate that is used to treat actinic keratosis, a precancerous skin condition. Catalyzes the conversion of 4,5,8-trihydroxycasbene into jolkinol C in presence of NAD. Also mediates the formation of casbene dione derivative and 4-ketocasbene from 4-hydroxy-8-ketocasbene and 4-hydroxycasbene, respectively. Together with CYP71D445, triggers the biosynthesis of 8-ketocasbene from 8-hydroxycasbene. The protein is Short chain aldehyde dehydrogenase 1 of Euphorbia lathyris (Caper spurge).